The sequence spans 211 residues: Secreted phosphoprotein 24 (211 aa).

Positions 1–29 (MISRMEKMTMMMKILIMFALGMNYWSCSG) are cleaved as a signal peptide. 2 disulfides stabilise this stretch: Cys-92–Cys-103 and Cys-116–Cys-134. Ser-96 bears the Phosphoserine mark. Phosphoserine occurs at positions 145, 146, 170, 173, and 182.

It belongs to the SPP2 family. In terms of processing, phosphorylation sites are present in the extracellular medium. In terms of tissue distribution, detected in liver and plasma.

It is found in the secreted. Could coordinate an aspect of bone turnover. In Homo sapiens (Human), this protein is Secreted phosphoprotein 24 (SPP2).